Consider the following 420-residue polypeptide: Trichothecene biosynthesis transcription regulator TRI10 (420 aa).

It belongs to the TRI10 transcription regulator family.

Its subcellular location is the nucleus. In terms of biological role, transcriptional activator of all of the trichothecene biosynthesis genes. Acts upstream of the cluster-encoded transcription factor TRI6 and is necessary for full expression of both the other trichothecene genes and the genes for the primary metabolic pathway that precedes the trichothecene biosynthetic pathway. The protein is Trichothecene biosynthesis transcription regulator TRI10 of Fusarium sporotrichioides.